The chain runs to 278 residues: 4-deoxy-L-threo-5-hexosulose-uronate ketol-isomerase (278 aa).

Positions 196, 198, 203, and 245 each coordinate Zn(2+).

This sequence belongs to the KduI family. The cofactor is Zn(2+).

The enzyme catalyses 5-dehydro-4-deoxy-D-glucuronate = 3-deoxy-D-glycero-2,5-hexodiulosonate. Its pathway is glycan metabolism; pectin degradation; 2-dehydro-3-deoxy-D-gluconate from pectin: step 4/5. Functionally, catalyzes the isomerization of 5-dehydro-4-deoxy-D-glucuronate to 3-deoxy-D-glycero-2,5-hexodiulosonate. The protein is 4-deoxy-L-threo-5-hexosulose-uronate ketol-isomerase of Edwardsiella ictaluri (strain 93-146).